Here is a 352-residue protein sequence, read N- to C-terminus: Putative [LysW]-L-2-aminoadipate 6-phosphate reductase (352 aa).

11–14 (SGYT) provides a ligand contact to NADP(+). Cys-148 is a catalytic residue. Asn-319 is an NADP(+) binding site.

Belongs to the NAGSA dehydrogenase family. Type 1 subfamily. LysY sub-subfamily.

It localises to the cytoplasm. The enzyme catalyses [amino-group carrier protein]-C-terminal-N-(1-carboxy-5-oxopentan-1-yl)-L-glutamine + phosphate + NADP(+) = [amino-group carrier protein]-C-terminal-N-(1-carboxy-5-phosphooxy-5-oxopentan-1-yl)-L-glutamine + NADPH + H(+). The protein operates within amino-acid biosynthesis; L-lysine biosynthesis via AAA pathway; L-lysine from L-alpha-aminoadipate (Thermus route): step 3/5. Catalyzes the NADPH-dependent reduction of [LysW]-aminoadipate 6-phosphate to yield [LysW]-aminoadipate 6-semialdehyde. This chain is Putative [LysW]-L-2-aminoadipate 6-phosphate reductase, found in Thermomicrobium roseum (strain ATCC 27502 / DSM 5159 / P-2).